The primary structure comprises 627 residues: Asparagine synthetase domain-containing protein 1 (627 aa).

The active-site For GATase activity is Cys2. Residues Cys2–Asn184 form the Glutamine amidotransferase type-2 domain. The 290-residue stretch at Ala308–Lys597 folds into the Asparagine synthetase domain. The disordered stretch occupies residues Gln373–Thr404.

The protein is Asparagine synthetase domain-containing protein 1 (Asnsd1) of Mus musculus (Mouse).